The primary structure comprises 254 residues: Rho-related protein racD (254 aa).

GTP is bound at residue 15 to 22 (GDGAVGKT). The short motif at 37-45 (YVPTVFDNF) is the Effector region element. Residues 62 to 66 (DTAGQ) and 120 to 123 (TKTD) each bind GTP. Low complexity predominate over residues 186-231 (AVTSPTSKSSGKSSPSSTSSKPSKTTTTTTTSSSSSSPPAASTAKP). Residues 186-254 (AVTSPTSKSS…KDKDEKKPAK (69 aa)) are disordered. Positions 232–254 (AGEKKLSWGLFRKKDKDEKKPAK) are enriched in basic and acidic residues.

The protein belongs to the small GTPase superfamily. Rho family.

This Dictyostelium discoideum (Social amoeba) protein is Rho-related protein racD (racD).